The primary structure comprises 132 residues: uncharacterized protein (132 aa).

The segment at 1 to 68 (MCSAGELLRG…HTGEPVGDDY (68 aa)) is disordered. The helical transmembrane segment at 100 to 120 (VIVIFFWVMLWFLGLQALGLV) threads the bilayer.

The protein belongs to the FAM241 family.

It is found in the membrane. This is an uncharacterized protein from Homo sapiens (Human).